The chain runs to 390 residues: 3-ketosteroid-9-alpha-monooxygenase, oxygenase component (390 aa).

The Rieske domain maps to 32 to 134 (WHCLGLLRDF…TLERNGQLYV (103 aa)). The [2Fe-2S] cluster site is built by Cys73, His75, Cys92, and His95. Residues Asn181, His187, His192, and Asp311 each contribute to the Fe cation site.

In terms of assembly, homotrimer. The two-component system 3-ketosteroid-9-alpha-monooxygenase is composed of an oxygenase component KshA and a reductase component KshB. It depends on [2Fe-2S] cluster as a cofactor. Fe cation is required as a cofactor.

It carries out the reaction androsta-1,4-diene-3,17-dione + 2 reduced [2Fe-2S]-[ferredoxin] + O2 + 2 H(+) = 9alpha-hydroxyandrosta-1,4-diene-3,17-dione + 2 oxidized [2Fe-2S]-[ferredoxin] + H2O. Its pathway is steroid metabolism; cholesterol degradation. Functionally, probably involved in the degradation of cholesterol. In vitro, catalyzes the introduction of a 9alpha-hydroxyl moiety into the ring B of 3-ketosteroid substrates such as 1,4-androstadiene-3,17-dione (ADD), 4-androstene-3,17-dione (AD), 4-androstene-17beta-ol-3-one (testosterone), 4-pregnene-3,20-dione (progesterone), 19-nor-4-androstene-3,17-dione, 1-(5alpha)-androstene-3,17-dione, 5alpha-androstane-3,17-dione, 5beta-androstane-3,17-dione, 5alpha-androstane-17beta-ol-3-one (stanolon), 11beta-hydrocortisone, 3-oxo-23,24-bisnorcholesta-4-en-22-oate (4-BNC), 23,24-bisnorcholesta-4-ene-22-oate, 3-oxo-23,24-bisnorcholesta-1,4-dien-22-oate (1,4-BNC) and 3-oxo-23,24-bisnorcholesta-1,4-dien-22-oyl-coenzyme A thioester (1,4-BNC-CoA). KshA5 has the broadest substrate range without a clear substrate preference and is active with Delta-4, Delta-1,4, 5alpha-H and 5beta-H steroids, as well as with steroids having bulky aliphatic side chains and an isopropionyl side chain at C17. The protein is 3-ketosteroid-9-alpha-monooxygenase, oxygenase component of Rhodococcus rhodochrous.